The primary structure comprises 347 residues: Vitellogenin-3 (347 aa).

The N-terminal stretch at 1–15 (MRGFILALVLALVGA) is a signal peptide. The N-linked (GlcNAc...) asparagine glycan is linked to Asn80. Low complexity predominate over residues 104-118 (PSATPLSSSSSTDSS). Disordered stretches follow at residues 104-174 (PSAT…DKHC) and 200-234 (QDPR…MFLG). Positions 124–133 (PGNKRDKDEI) are enriched in basic and acidic residues. Over residues 144–163 (SSSSSSSSSTGSGSSKTCSS) the composition is skewed to low complexity. Positions 164–174 (SREDSSRDKHC) are enriched in basic and acidic residues. N-linked (GlcNAc...) asparagine glycosylation occurs at Asn208. A compositionally biased stretch (low complexity) spans 209 to 219 (SSISSSSSSSS).

Phosvitin, an egg yolk storage protein, is one of the most highly phosphorylated (10%) proteins in nature. Post-translationally, cathepsin D is responsible for intraoocytic processing of vitellogenin. In terms of processing, may contain intrachain disulfide bonds. In terms of tissue distribution, produced by the liver, secreted into the blood and then sequestered by receptor mediated endocytosis into growing oocytes, where it is generally cleaved, giving rise to the respective yolk components.

Functionally, precursor of the egg-yolk proteins that are sources of nutrients during early development of oviparous organisms. Phosvitin is believed to be of importance in sequestering calcium, iron and other cations for the developing embryo. The sequence is that of Vitellogenin-3 (VTG3) from Gallus gallus (Chicken).